The following is a 122-amino-acid chain: MIQTESRLEVADNTGAKSVLCIKVLGGSKRRYASVGDVIKVSIKEAAPRGRVKKGEIYSAVVVRTAKGIRRADGSLVKFDGNAAVLLNAKLEPIGTRIFGPVTRELRTEKFMKIVSLAPEVL.

It belongs to the universal ribosomal protein uL14 family. Part of the 50S ribosomal subunit. Forms a cluster with proteins L3 and L19. In the 70S ribosome, L14 and L19 interact and together make contacts with the 16S rRNA in bridges B5 and B8.

Binds to 23S rRNA. Forms part of two intersubunit bridges in the 70S ribosome. The sequence is that of Large ribosomal subunit protein uL14 from Variovorax paradoxus (strain S110).